Reading from the N-terminus, the 477-residue chain is Probable malate:quinone oxidoreductase (477 aa).

Belongs to the MQO family. FAD serves as cofactor.

The catalysed reaction is (S)-malate + a quinone = a quinol + oxaloacetate. The protein operates within carbohydrate metabolism; tricarboxylic acid cycle; oxaloacetate from (S)-malate (quinone route): step 1/1. This chain is Probable malate:quinone oxidoreductase, found in Synechococcus sp. (strain RCC307).